The chain runs to 624 residues: Heat shock factor protein 5 (624 aa).

Residues 11–228 (NPNNFPAKLW…FHRSFRRDNL (218 aa)) mediate DNA binding. Disordered regions lie at residues 52 to 77 (LSPP…SGVG), 112 to 138 (GAAG…HSPH), 186 to 214 (SASA…HGPV), 429 to 461 (CPSS…LEPL), and 572 to 605 (GPAN…DLHL). Gly residues-rich tracts occupy residues 58–77 (GAGG…SGVG) and 112–127 (GAAG…GPAG). 2 stretches are compositionally biased toward low complexity: residues 186-197 (SASASTSPLQHQ) and 442-457 (PNAN…QASQ). Ser600 is modified (phosphoserine).

Belongs to the HSF family. In terms of assembly, homooligomer. In terms of tissue distribution, highly expressed in testis particularly in spermatocytes (at protein level). Not expressed in fetal testis and ovary.

The protein resides in the nucleus. Its subcellular location is the chromosome. In terms of biological role, DNA-binding transcription factor that is essential for male fertility, spermatogenesis and meiotic prophase progression in spermatocytes under non-stress conditions. Positvely and negatively regulates gene expression to ensure progression of meiotic prophase beyond pachytene stage in spermatocytes. Plays a role in male germline meiotic sex chromosome remodeling and silencing through regulation of SMARCA4. This is Heat shock factor protein 5 (Hsf5) from Mus musculus (Mouse).